Here is a 532-residue protein sequence, read N- to C-terminus: Cytochrome P450 12b1, mitochondrial (532 aa).

Cys-480 lines the heme pocket.

The protein belongs to the cytochrome P450 family. The cofactor is heme.

It is found in the mitochondrion. Functionally, probably involved in steroid hormones biosynthesis. The sequence is that of Cytochrome P450 12b1, mitochondrial (Cyp12b1) from Drosophila acanthoptera (Fruit fly).